The following is an 84-amino-acid chain: Large ribosomal subunit protein bL27 (84 aa).

The protein belongs to the bacterial ribosomal protein bL27 family.

In Kocuria rhizophila (strain ATCC 9341 / DSM 348 / NBRC 103217 / DC2201), this protein is Large ribosomal subunit protein bL27.